A 605-amino-acid polypeptide reads, in one-letter code: Elongation factor 4 (605 aa).

Residues 4–181 form the tr-type G domain; that stretch reads NKIKTFSIIA…AIVEYVPSPL (178 aa). Residues 16-21 and 128-131 contribute to the GTP site; these read DHGKST and NKVD.

This sequence belongs to the TRAFAC class translation factor GTPase superfamily. Classic translation factor GTPase family. LepA subfamily.

The protein localises to the cell membrane. The catalysed reaction is GTP + H2O = GDP + phosphate + H(+). In terms of biological role, required for accurate and efficient protein synthesis under certain stress conditions. May act as a fidelity factor of the translation reaction, by catalyzing a one-codon backward translocation of tRNAs on improperly translocated ribosomes. Back-translocation proceeds from a post-translocation (POST) complex to a pre-translocation (PRE) complex, thus giving elongation factor G a second chance to translocate the tRNAs correctly. Binds to ribosomes in a GTP-dependent manner. In Mycoplasmopsis synoviae (strain 53) (Mycoplasma synoviae), this protein is Elongation factor 4.